Consider the following 151-residue polypeptide: Small heat shock protein HspD (151 aa).

One can recognise a sHSP domain in the interval 28-138; the sequence is RATEDNYPPY…KPRRIAINGA (111 aa).

The protein belongs to the small heat shock protein (HSP20) family.

This is Small heat shock protein HspD (hspD) from Bradyrhizobium diazoefficiens (strain JCM 10833 / BCRC 13528 / IAM 13628 / NBRC 14792 / USDA 110).